The following is a 619-amino-acid chain: ATP-dependent zinc metalloprotease FtsH (619 aa).

The Cytoplasmic segment spans residues 1–5 (MKYFK). Residues 6–26 (GISFYIIIFILILVIITFFTA) form a helical membrane-spanning segment. Topologically, residues 27–110 (TDNPPKMSYS…VTQPPQPPWW (84 aa)) are extracellular. The helical transmembrane segment at 111–131 (VSMLPTVGLVIILILIWFFFI) threads the bilayer. Over 132 to 619 (QQSQGGGGGN…GSSQTPQLEG (488 aa)) the chain is Cytoplasmic. 204-211 (GPPGTGKT) is a binding site for ATP. His-426 is a binding site for Zn(2+). The active site involves Glu-427. Zn(2+) contacts are provided by His-430 and Asp-502.

It in the central section; belongs to the AAA ATPase family. The protein in the C-terminal section; belongs to the peptidase M41 family. In terms of assembly, homohexamer. The cofactor is Zn(2+).

Its subcellular location is the cell membrane. Its function is as follows. Acts as a processive, ATP-dependent zinc metallopeptidase for both cytoplasmic and membrane proteins. Plays a role in the quality control of integral membrane proteins. In Ruminiclostridium cellulolyticum (strain ATCC 35319 / DSM 5812 / JCM 6584 / H10) (Clostridium cellulolyticum), this protein is ATP-dependent zinc metalloprotease FtsH.